The sequence spans 344 residues: Phenylalanine--tRNA ligase alpha subunit (344 aa).

E256 serves as a coordination point for Mg(2+).

It belongs to the class-II aminoacyl-tRNA synthetase family. Phe-tRNA synthetase alpha subunit type 1 subfamily. As to quaternary structure, tetramer of two alpha and two beta subunits. It depends on Mg(2+) as a cofactor.

The protein resides in the cytoplasm. The catalysed reaction is tRNA(Phe) + L-phenylalanine + ATP = L-phenylalanyl-tRNA(Phe) + AMP + diphosphate + H(+). The protein is Phenylalanine--tRNA ligase alpha subunit of Bacillus pumilus (strain SAFR-032).